Consider the following 289-residue polypeptide: Glucosamine-6-phosphate deaminase 1 (289 aa).

Residue lysine 64 is modified to N6-acetyllysine. Aspartate 72 serves as the catalytic Proton acceptor; for enolization step. Residue aspartate 141 is the For ring-opening step of the active site. Histidine 143 (proton acceptor; for ring-opening step) is an active-site residue. Glutamate 148 (for ring-opening step) is an active-site residue. Residue threonine 161 is modified to Phosphothreonine.

It belongs to the glucosamine/galactosamine-6-phosphate isomerase family. As to quaternary structure, homohexamer.

The protein localises to the cytoplasm. It carries out the reaction alpha-D-glucosamine 6-phosphate + H2O = beta-D-fructose 6-phosphate + NH4(+). It functions in the pathway nucleotide-sugar biosynthesis; UDP-N-acetyl-alpha-D-glucosamine biosynthesis; alpha-D-glucosamine 6-phosphate from D-fructose 6-phosphate: step 1/1. Its activity is regulated as follows. Allosterically activated by N-acetylglucosamine-6-phosphate (GlcNAc6P). Its function is as follows. Catalyzes the reversible conversion of alpha-D-glucosamine 6-phosphate (GlcN-6P) into beta-D-fructose 6-phosphate (Fru-6P) and ammonium ion, a regulatory reaction step in de novo uridine diphosphate-N-acetyl-alpha-D-glucosamine (UDP-GlcNAc) biosynthesis via hexosamine pathway. Deamination is coupled to aldo-keto isomerization mediating the metabolic flux from UDP-GlcNAc toward Fru-6P. At high ammonium level can drive amination and isomerization of Fru-6P toward hexosamines and UDP-GlcNAc synthesis. Has a role in fine tuning the metabolic fluctuations of cytosolic UDP-GlcNAc and their effects on hyaluronan synthesis that occur during tissue remodeling. Seems to trigger calcium oscillations in mammalian eggs. These oscillations serve as the essential trigger for egg activation and early development of the embryo. The chain is Glucosamine-6-phosphate deaminase 1 from Pongo abelii (Sumatran orangutan).